We begin with the raw amino-acid sequence, 153 residues long: Cytochrome c-type biogenesis protein CcmE (153 aa).

At 1–7 the chain is on the cytoplasmic side; sequence MTRKKRR. A helical; Signal-anchor for type II membrane protein transmembrane segment spans residues 8 to 28; sequence LYFVVLGMLALFAAAGLTLTA. The Periplasmic portion of the chain corresponds to 29-153; it reads FQDNLVFFYS…PPTAAAAPAP (125 aa). H121 and Y125 together coordinate heme. The segment at 132 to 153 is disordered; that stretch reads ESLKASGKWQHGPPTAAAAPAP. A compositionally biased stretch (low complexity) spans 144–153; sequence PPTAAAAPAP.

This sequence belongs to the CcmE/CycJ family.

The protein resides in the cell inner membrane. Its function is as follows. Heme chaperone required for the biogenesis of c-type cytochromes. Transiently binds heme delivered by CcmC and transfers the heme to apo-cytochromes in a process facilitated by CcmF and CcmH. In Rhodospirillum rubrum (strain ATCC 11170 / ATH 1.1.1 / DSM 467 / LMG 4362 / NCIMB 8255 / S1), this protein is Cytochrome c-type biogenesis protein CcmE.